Consider the following 204-residue polypeptide: Thymidylate kinase (204 aa).

Residue 9–16 (GLDGAGKS) participates in ATP binding.

Belongs to the thymidylate kinase family.

It catalyses the reaction dTMP + ATP = dTDP + ADP. Phosphorylation of dTMP to form dTDP in both de novo and salvage pathways of dTTP synthesis. In Francisella philomiragia subsp. philomiragia (strain ATCC 25017 / CCUG 19701 / FSC 153 / O#319-036), this protein is Thymidylate kinase.